Consider the following 243-residue polypeptide: Segregation and condensation protein A (243 aa).

Belongs to the ScpA family. As to quaternary structure, component of a cohesin-like complex composed of ScpA, ScpB and the Smc homodimer, in which ScpA and ScpB bind to the head domain of Smc. The presence of the three proteins is required for the association of the complex with DNA.

It localises to the cytoplasm. In terms of biological role, participates in chromosomal partition during cell division. May act via the formation of a condensin-like complex containing Smc and ScpB that pull DNA away from mid-cell into both cell halves. This chain is Segregation and condensation protein A, found in Staphylococcus haemolyticus (strain JCSC1435).